Reading from the N-terminus, the 423-residue chain is Vitamin D3 receptor (423 aa).

Residues Cys24, Cys27, Cys41, Cys44, Cys60, Cys66, Cys76, and Cys79 each coordinate Zn(2+). 2 NR C4-type zinc fingers span residues Cys24 to Cys44 and Cys60 to Cys84. The segment at residues Cys24–Met89 is a DNA-binding region (nuclear receptor). Residues Asp97–Glu126 form a hinge region. Positions Glu127 to Gly419 constitute an NR LBD domain. Tyr143 contacts calcitriol. Residues Met159–Ser180 form a disordered region. A compositionally biased stretch (low complexity) spans Thr171 to Ser180. Ser233 provides a ligand contact to calcitriol. Residues Lys242–Lys260 are interaction with coactivator LXXLL motif. Calcitriol-binding residues include Arg270, Ser274, His301, and His393. A 9aaTAD motif is present at residues Pro412–Asn420.

This sequence belongs to the nuclear hormone receptor family. NR1 subfamily. As to quaternary structure, homodimer in the absence of bound vitamin D3. Heterodimer with RXRA after vitamin D3 binding. Interacts with MED1 and NCOA6. Interacts with MED1, NCOA1, NCOA2, NCOA3 and NCOA6 coactivators, leading to a strong increase of transcription of target genes. Interacts with the corepressor NCOR1. Interacts with SNW1. Interacts with IRX4, the interaction does not affect its transactivation activity. Interacts with CRY1. Interacts with CRY2 in a ligand-dependent manner. Post-translationally, ubiquitinated by UBR5, leading to its degradation: UBR5 specifically recognizes and binds ligand-bound VDR when it is not associated with coactivators (NCOAs). In presence of NCOAs, the UBR5-degron is not accessible, preventing its ubiquitination and degradation. As to expression, detected in intestine and kidney.

It is found in the nucleus. The protein localises to the cytoplasm. Nuclear receptor for calcitriol, the active form of vitamin D3 which mediates the action of this vitamin on cells. Enters the nucleus upon vitamin D3 binding where it forms heterodimers with the retinoid X receptor/RXR. The VDR-RXR heterodimers bind to specific response elements on DNA and activate the transcription of vitamin D3-responsive target genes. Plays a central role in calcium homeostasis. Also functions as a receptor for the secondary bile acid lithocholic acid (LCA) and its metabolites. This Rattus norvegicus (Rat) protein is Vitamin D3 receptor (Vdr).